Consider the following 359-residue polypeptide: Histamine H2 receptor (359 aa).

Topologically, residues 1–22 are extracellular; that stretch reads MAFNGTVPSFCMDFTVYKVTIS. N-linked (GlcNAc...) asparagine glycosylation is present at asparagine 4. Residues 23–44 form a helical membrane-spanning segment; the sequence is VILIILILVTVAGNVVVCLAVG. Residues 45–57 are Cytoplasmic-facing; sequence LNRRLRSLTNCFI. A helical transmembrane segment spans residues 58–81; sequence VSLAVTDLLLGLLVLPFSAIYQLS. Residues 82–92 lie on the Extracellular side of the membrane; it reads CKWSFSKVFCN. Cysteine 91 and cysteine 174 are disulfide-bonded. A helical transmembrane segment spans residues 93–114; that stretch reads IYTSLDVMLCTASILNLFMISL. The Cytoplasmic portion of the chain corresponds to 115-134; that stretch reads DRYCAVTDPLRYPVLITPAR. The chain crosses the membrane as a helical span at residues 135–159; the sequence is VAISLVFIWVISITLSFLSIHLGWN. Over 160 to 180 the chain is Extracellular; it reads SRNETSKDNDTIVKCKVQVNE. The chain crosses the membrane as a helical span at residues 181-204; that stretch reads VYGLVDGLVTFYLPLLIMCITYFR. Over 205 to 234 the chain is Cytoplasmic; that stretch reads IFKIAREQARRINHIGSWKAATIREHKATV. A helical transmembrane segment spans residues 235 to 258; sequence TLAAVMGAFIICWFPYFTVFVYRG. Residues 259-267 are Extracellular-facing; sequence LKGDDAVNE. The helical transmembrane segment at 268–289 threads the bilayer; the sequence is VFEDVVLWLGYANSALNPILYA. Residues 290–359 are Cytoplasmic-facing; sequence ALNRDFRTAY…VTAPQGATNR (70 aa). A lipid anchor (S-palmitoyl cysteine) is attached at cysteine 305.

Belongs to the G-protein coupled receptor 1 family.

The protein resides in the cell membrane. The H2 subclass of histamine receptors mediates gastric acid secretion. The activity of this receptor is mediated by G proteins which activate adenylyl cyclase. The polypeptide is Histamine H2 receptor (HRH2) (Cavia porcellus (Guinea pig)).